The following is a 504-amino-acid chain: Maturase K (504 aa).

The protein belongs to the intron maturase 2 family. MatK subfamily.

The protein localises to the plastid. The protein resides in the chloroplast. Functionally, usually encoded in the trnK tRNA gene intron. Probably assists in splicing its own and other chloroplast group II introns. The sequence is that of Maturase K from Kokia drynarioides (Hawaiian tree cotton).